We begin with the raw amino-acid sequence, 593 residues long: Isocitrate dehydrogenase kinase/phosphatase (593 aa).

Residues Ala-315–Met-321 and Lys-336 each bind ATP. The active site involves Asp-371.

It belongs to the AceK family.

Its subcellular location is the cytoplasm. It catalyses the reaction L-seryl-[isocitrate dehydrogenase] + ATP = O-phospho-L-seryl-[isocitrate dehydrogenase] + ADP + H(+). Bifunctional enzyme which can phosphorylate or dephosphorylate isocitrate dehydrogenase (IDH) on a specific serine residue. This is a regulatory mechanism which enables bacteria to bypass the Krebs cycle via the glyoxylate shunt in response to the source of carbon. When bacteria are grown on glucose, IDH is fully active and unphosphorylated, but when grown on acetate or ethanol, the activity of IDH declines drastically concomitant with its phosphorylation. This is Isocitrate dehydrogenase kinase/phosphatase from Salmonella typhi.